A 538-amino-acid chain; its full sequence is Guanine nucleotide-binding protein-like 3 (538 aa).

The segment covering 1–45 has biased composition (basic residues); the sequence is MKRPKLKKASKRMTCHKRYKIQKKVREHHRKLRKEAKKRGHKKPK. The tract at residues 1 to 125 is disordered; it reads MKRPKLKKAS…KAKSGKQNPK (125 aa). The interval 2 to 46 is basic; the sequence is KRPKLKKASKRMTCHKRYKIQKKVREHHRKLRKEAKKRGHKKPKK. A coiled-coil region spans residues 54–95; the sequence is APFKEALLREAELRKQQLEELKQQQKLDRQKEQERKRKLEIS. Positions 59-94 are enriched in basic and acidic residues; sequence ALLREAELRKQQLEELKQQQKLDRQKEQERKRKLEI. K79 carries the N6-acetyllysine modification. K91 participates in a covalent cross-link: Glycyl lysine isopeptide (Lys-Gly) (interchain with G-Cter in SUMO2). Phosphoserine is present on residues S95 and S101. Residues 95-110 are compositionally biased toward acidic residues; it reads SPDDEQSNVETQEESD. Over residues 115–125 the composition is skewed to basic residues; sequence KKAKSGKQNPK. The CP-type G domain occupies 129–307; it reads CQELKKVIEA…IIDSPCFIIS (179 aa). Position 176 to 179 (176 to 179) interacts with GTP; sequence NKSD. Residues K177, K248, K262, and K270 each participate in a glycyl lysine isopeptide (Lys-Gly) (interchain with G-Cter in SUMO2) cross-link. Residue 256 to 263 coordinates GTP; the sequence is GFPNVGKS. Residues 277–451 are intermediate; that stretch reads VGVSMGLTRS…HLTNKILFRS (175 aa). 300–303 contributes to the GTP binding site; the sequence is DSPC. 2 stretches are compositionally biased toward basic and acidic residues: residues 460–473 and 481–491; these read EEKDIPEESPKQTE and QEHVTGEKNAE. The segment at 460 to 532 is acidic; sequence EEKDIPEESP…KMSEEDDAYD (73 aa). A disordered region spans residues 460-538; the sequence is EEKDIPEESP…DAYDFTTDYI (79 aa). Phosphoserine is present on residues S493, S505, and S518. Basic and acidic residues predominate over residues 514–524; sequence PSDRSFILDKM.

This sequence belongs to the TRAFAC class YlqF/YawG GTPase family. In terms of assembly, interacts with MDM2; this interaction stabilizes MDM2. Interaction with MDM2 occurs in the nucleoplasm and is triggered by a nucleolar release mechanism, such as mitosis-induced nucleolar disassembly. May interact with p53/TP53 via its basic domain. This interaction is most probably indirect and mediated by MDM2-binding. Expressed in testis.

Its subcellular location is the nucleus. The protein localises to the nucleolus. Its function is as follows. May be required to maintain the proliferative capacity of stem cells. Stabilizes MDM2 by preventing its ubiquitination, and hence proteasomal degradation. The protein is Guanine nucleotide-binding protein-like 3 (Gnl3) of Rattus norvegicus (Rat).